The sequence spans 151 residues: 3-dehydroquinate dehydratase (151 aa).

The active-site Proton acceptor is tyrosine 24. Substrate is bound by residues asparagine 76, histidine 82, and aspartate 89. Histidine 102 serves as the catalytic Proton donor. Substrate contacts are provided by residues 103–104 and arginine 113; that span reads VS.

This sequence belongs to the type-II 3-dehydroquinase family. In terms of assembly, homododecamer.

The catalysed reaction is 3-dehydroquinate = 3-dehydroshikimate + H2O. Its pathway is metabolic intermediate biosynthesis; chorismate biosynthesis; chorismate from D-erythrose 4-phosphate and phosphoenolpyruvate: step 3/7. Catalyzes a trans-dehydration via an enolate intermediate. In Rhodopseudomonas palustris (strain BisA53), this protein is 3-dehydroquinate dehydratase.